Here is a 220-residue protein sequence, read N- to C-terminus: Methylamine utilization ferredoxin-type protein MauM (220 aa).

4Fe-4S ferredoxin-type domains lie at 50-80 (ALPEDDFLAACVRCGLCVRACPYDTLRLAEM) and 88-120 (TPFFVARETPCFMCTDVPCAKACPTGALDRDIP). [4Fe-4S] cluster contacts are provided by Cys-60, Cys-63, Cys-66, Cys-70, Cys-98, Cys-101, Cys-106, Cys-110, Cys-138, Cys-146, Cys-149, Cys-153, Cys-182, Cys-185, Cys-188, and Cys-192. The 32-residue stretch at 173–204 (VIPTVHSDKCTGCGTCEKHCVLGQAAIRVLPR) folds into the 4Fe-4S ferredoxin-type 3 domain.

The protein operates within one-carbon metabolism; methylamine degradation. Involved in electron transfer. In Methylorubrum extorquens (strain ATCC 14718 / DSM 1338 / JCM 2805 / NCIMB 9133 / AM1) (Methylobacterium extorquens), this protein is Methylamine utilization ferredoxin-type protein MauM (mauM).